Reading from the N-terminus, the 476-residue chain is MSAVLKSPADSAIADISLAEWGRKEIRIAETEMPGLMAIREEFAAKQPLKGARITGSLHMTIQTAVLIETLKALGADVRWASCNIFSTQDHAAAAIAATGTPVFAIKGETLVDYWDYTHRIFDFGPKGSEGEGPNMILDDGGDATLLMHLGKRAEKDASVLANPGSEEERILFAAIKAKLAEDSTWYSRKSAQIIGVTEETTTGVHRLKEMSAKGTLMFRAINVNDSVTKSKFDNLYGCRESLVDGIKRATDVMIAGKVAVVCGYGDVGKGSAQALRALSAQVWVTEIDPINALQAAMEGFKVVTMEWAADKADIFVTTTGNRDVITFEHMKAMKDQAIVCNIGHFDNEIQVAKLEEHCQWEEIKPQVDHVIFPDGKRIILLAKGRLVNLGCGTGHPSFVMSNSFANQTIAQIELFTHPEGYDVGKVYVLPKHLDEKVARLHLKKVGAMLTELSDEQAAYIGVPKQGPYKPDTYRY.

3 residues coordinate substrate: T61, D140, and E200. 201–203 provides a ligand contact to NAD(+); sequence TTT. Substrate contacts are provided by K230 and D234. NAD(+) contacts are provided by residues N235, 264–269, E287, N322, 343–345, and N389; these read GYGDVG and IGH.

It belongs to the adenosylhomocysteinase family. It depends on NAD(+) as a cofactor.

The protein localises to the cytoplasm. The catalysed reaction is S-adenosyl-L-homocysteine + H2O = L-homocysteine + adenosine. The protein operates within amino-acid biosynthesis; L-homocysteine biosynthesis; L-homocysteine from S-adenosyl-L-homocysteine: step 1/1. Its function is as follows. May play a key role in the regulation of the intracellular concentration of adenosylhomocysteine. This chain is Adenosylhomocysteinase, found in Acidovorax ebreus (strain TPSY) (Diaphorobacter sp. (strain TPSY)).